The primary structure comprises 428 residues: Adenylosuccinate synthetase (428 aa).

GTP contacts are provided by residues 12–18 (GDEGKGK) and 40–42 (GHT). Catalysis depends on Asp13, which acts as the Proton acceptor. Mg(2+) is bound by residues Asp13 and Gly40. Residues 13-16 (DEGK), 38-41 (NAGH), Thr130, Arg144, Gln224, Thr239, and Arg303 contribute to the IMP site. Catalysis depends on His41, which acts as the Proton donor. Position 299-305 (299-305 (VTTGRSR)) interacts with substrate. GTP contacts are provided by residues Arg305, 331 to 333 (KID), and 413 to 415 (GVG).

It belongs to the adenylosuccinate synthetase family. In terms of assembly, homodimer. It depends on Mg(2+) as a cofactor.

Its subcellular location is the cytoplasm. It carries out the reaction IMP + L-aspartate + GTP = N(6)-(1,2-dicarboxyethyl)-AMP + GDP + phosphate + 2 H(+). It functions in the pathway purine metabolism; AMP biosynthesis via de novo pathway; AMP from IMP: step 1/2. Functionally, plays an important role in the de novo pathway of purine nucleotide biosynthesis. Catalyzes the first committed step in the biosynthesis of AMP from IMP. The protein is Adenylosuccinate synthetase of Clostridium perfringens (strain 13 / Type A).